Consider the following 146-residue polypeptide: PSVQDAAAQLTADVKKDLRDSWKVLGSDKKGDGMALMTTLFNDHQETIAYFKRMGDVSQGMANSKLRGHSITLMYALQNFIDQLDSTDDLICVVEKFAVNHITRKISGAEFGKINGPMKKVLASKNFGDKYANAWAKLVGVVQAAL.

Residues 9-146 (QLTADVKKDL…KLVGVVQAAL (138 aa)) form the Globin domain. Position 101 (histidine 101) interacts with heme b.

It belongs to the globin family. As to quaternary structure, homodimer.

The polypeptide is Globin-2B (Anadara trapezia (Sydney cockle)).